Here is a 435-residue protein sequence, read N- to C-terminus: Enolase (435 aa).

Position 163 (Gln163) interacts with (2R)-2-phosphoglycerate. Glu205 serves as the catalytic Proton donor. Positions 243, 292, and 319 each coordinate Mg(2+). Residues Lys344, Arg373, Ser374, and Lys395 each coordinate (2R)-2-phosphoglycerate. Lys344 serves as the catalytic Proton acceptor.

The protein belongs to the enolase family. The cofactor is Mg(2+).

It is found in the cytoplasm. It localises to the secreted. The protein resides in the cell surface. The enzyme catalyses (2R)-2-phosphoglycerate = phosphoenolpyruvate + H2O. Its pathway is carbohydrate degradation; glycolysis; pyruvate from D-glyceraldehyde 3-phosphate: step 4/5. Catalyzes the reversible conversion of 2-phosphoglycerate (2-PG) into phosphoenolpyruvate (PEP). It is essential for the degradation of carbohydrates via glycolysis. The polypeptide is Enolase (Streptococcus agalactiae serotype Ia (strain ATCC 27591 / A909 / CDC SS700)).